A 208-amino-acid polypeptide reads, in one-letter code: Uracil phosphoribosyltransferase (208 aa).

5-phospho-alpha-D-ribose 1-diphosphate is bound by residues arginine 78, arginine 103, and 130 to 138; that span reads DPMLATGGS. Residues isoleucine 193 and 198-200 each bind uracil; that span reads GDA. Aspartate 199 serves as a coordination point for 5-phospho-alpha-D-ribose 1-diphosphate.

This sequence belongs to the UPRTase family. It depends on Mg(2+) as a cofactor.

It catalyses the reaction UMP + diphosphate = 5-phospho-alpha-D-ribose 1-diphosphate + uracil. Its pathway is pyrimidine metabolism; UMP biosynthesis via salvage pathway; UMP from uracil: step 1/1. Its activity is regulated as follows. Allosterically activated by GTP. In terms of biological role, catalyzes the conversion of uracil and 5-phospho-alpha-D-ribose 1-diphosphate (PRPP) to UMP and diphosphate. This Shewanella sp. (strain ANA-3) protein is Uracil phosphoribosyltransferase.